We begin with the raw amino-acid sequence, 279 residues long: MELKCFIEILRPINCLIAGLVGILGATVALGHLPPIKTSLLIFLVVFLECSWGNIINDYFDYEIDKINRPNRPLPRGALSKNIALVYGISLGGVAILIAYLINFEAFIFALGAYLLMYLYARKLKPQPFIGNLVVATLTGITPIYGAIAVGKIGLAGYLALCAFLVNVAREIFKDIEDIEGDKAQGAKTLPIVWGIESSSKIGVIFSVATIIASLLPVKAGIGLGYFPIIIVDGIILWAAYEVLKNPSPKTAGRVQKKLKIAIYLAVFSFLLGSITKGV.

A run of 9 helical transmembrane segments spans residues 16–36, 40–60, 77–99, 104–121, 124–144, 146–166, 192–212, 220–240, and 259–279; these read LIAG…LPPI, LLIF…NDYF, GALS…ILIA, FEAF…YLYA, LKPQ…ITPI, GAIA…AFLV, IVWG…ATII, AGIG…LWAA, and LKIA…TKGV.

This sequence belongs to the UbiA prenyltransferase family. DGGGP synthase subfamily. The cofactor is Mg(2+).

The protein localises to the cell membrane. It carries out the reaction sn-3-O-(geranylgeranyl)glycerol 1-phosphate + (2E,6E,10E)-geranylgeranyl diphosphate = 2,3-bis-O-(geranylgeranyl)-sn-glycerol 1-phosphate + diphosphate. It participates in membrane lipid metabolism; glycerophospholipid metabolism. Its function is as follows. Prenyltransferase that catalyzes the transfer of the geranylgeranyl moiety of geranylgeranyl diphosphate (GGPP) to the C2 hydroxyl of (S)-3-O-geranylgeranylglyceryl phosphate (GGGP). This reaction is the second ether-bond-formation step in the biosynthesis of archaeal membrane lipids. This chain is Digeranylgeranylglyceryl phosphate synthase, found in Thermococcus sibiricus (strain DSM 12597 / MM 739).